A 438-amino-acid polypeptide reads, in one-letter code: Putative phospholipase A2 (438 aa).

Ser257 (nucleophile) is an active-site residue. Residues Asp291 and His368 each act as charge relay system in the active site.

This sequence belongs to the serine esterase family.

The protein resides in the cytoplasm. The protein localises to the nucleus. The enzyme catalyses a 1-O-alkyl-2-acetyl-sn-glycero-3-phosphocholine + H2O = a 1-O-alkyl-sn-glycero-3-phosphocholine + acetate + H(+). The sequence is that of Putative phospholipase A2 from Schizosaccharomyces pombe (strain 972 / ATCC 24843) (Fission yeast).